The chain runs to 553 residues: Thermosome subunit beta (553 aa).

The tract at residues 534–553 (KKSEGKTGEKKESEKGKEED) is disordered.

The protein belongs to the TCP-1 chaperonin family. In terms of assembly, forms a Heterooligomeric complex of two stacked eight-membered rings.

Molecular chaperone; binds unfolded polypeptides in vitro, and has a weak ATPase activity. This chain is Thermosome subunit beta (thsB), found in Sulfolobus acidocaldarius (strain ATCC 33909 / DSM 639 / JCM 8929 / NBRC 15157 / NCIMB 11770).